The following is a 966-amino-acid chain: LRR receptor-like serine/threonine-protein kinase ERL1 (966 aa).

The N-terminal stretch at 1 to 25 (MKEKMQRMVLSLAMVGFMVFGVASA) is a signal peptide. Residues 26–582 (MNNEGKALMA…PLPKSRVFSR (557 aa)) are Extracellular-facing. Residues 40 to 63 (FSNLVNMLLDWDDVHNSDLCSWRG) form an LRR 1 repeat. 2 N-linked (GlcNAc...) asparagine glycosylation sites follow: asparagine 68 and asparagine 77. LRR repeat units follow at residues 75-94 (SLNLSSLNLGGEISPAIGDL), 95-118 (RNLQSIDLQGNKLAGQIPDEIGNC), 120-142 (SLVYLDLSENLLYGDIPFSISKL), 143-166 (KQLETLNLKNNQLTGPVPATLTQI), 168-190 (NLKRLDLAGNHLTGEISRLLYWN), 192-214 (VLQYLGLRGNMLTGTLSSDMCQL), 215-238 (TGLWYFDVRGNNLTGTIPESIGNC), 239-261 (TSFQILDISYNQITGEIPYNIGF), 262-285 (LQVATLSLQGNRLTGRIPEVIGLM), 286-311 (QALAVLDLSDNELVGPIPPILGNLSF), 313-333 (GKLYLHGNMLTGPIPSELGNM), 334-357 (SRLSYLQLNDNKLVGTIPPELGKL), 359-381 (QLFELNLANNRLVGPIPSNISSC), 383-404 (ALNQFNVHGNLLSGSIPLAFRN), 405-429 (LGSLTYLNLSSNNFKGKIPVELGHI), 431-453 (NLDKLDLSGNNFSGSIPLTLGDL), 454-476 (EHLLILNLSRNHLSGQLPAEFGN), 478-500 (RSIQMIDVSFNLLSGVIPTELGQ), 501-525 (LQNLNSLILNNNKLHGKIPDQLTNC), and 527-550 (TLVNLNVSFNNLSGIVPPMKNFSR). Asparagine 226 and asparagine 237 each carry an N-linked (GlcNAc...) asparagine glycan. 2 N-linked (GlcNAc...) asparagine glycosylation sites follow: asparagine 308 and asparagine 332. The N-linked (GlcNAc...) asparagine glycan is linked to asparagine 377. 3 N-linked (GlcNAc...) asparagine glycosylation sites follow: asparagine 412, asparagine 441, and asparagine 460. Residues asparagine 532, asparagine 537, and asparagine 547 are each glycosylated (N-linked (GlcNAc...) asparagine). Residues 583 to 603 (GALICIVLGVITLLCMIFLAV) traverse the membrane as a helical segment. Residues 604-966 (YKSMQQKKIL…FREVISKSSI (363 aa)) are Cytoplasmic-facing. A phosphothreonine mark is found at threonine 637 and threonine 645. The Protein kinase domain maps to 648–921 (LNEKFIIGYG…RVLLSLVPSL (274 aa)). Residues 654–662 (IGYGASSTV) and lysine 676 each bind ATP. Tyrosine 721 and tyrosine 760 each carry phosphotyrosine. The Proton acceptor role is filled by aspartate 773. A Phosphotyrosine modification is found at tyrosine 815. Position 823 is a phosphothreonine (threonine 823).

The protein belongs to the protein kinase superfamily. Ser/Thr protein kinase family. As to quaternary structure, homodimer and heterodimer with ERECTA and TMM. Interacts with EPF1 and EPF2. Interacts with SERK1, SERK2, SERK3/BAK1 and SERK4 in a EPF1-induced manner. Mostly expressed in developing organs, including bud clusters, flowers, siliques and young rosettes. Also detected in mature aboveground organs, such as leaves, stems and pedicels, but barely in roots.

The protein localises to the cell membrane. The catalysed reaction is L-seryl-[protein] + ATP = O-phospho-L-seryl-[protein] + ADP + H(+). It carries out the reaction L-threonyl-[protein] + ATP = O-phospho-L-threonyl-[protein] + ADP + H(+). Functionally, receptor kinase that regulates inflorescence architecture and organ shape as well as stomatal patterning, including density and clustering, together with ER and ERL2. Redundantly involved with ER in procambial development regulation. Forms a functional ligand-receptor pair with EPF1 (AC Q8S8I4). Forms a constitutive complex with TMM involved in the recognition of the stomatal regulatory peptides EPF1, EPF2 and EPFL9/STOMAGEN. The polypeptide is LRR receptor-like serine/threonine-protein kinase ERL1 (Arabidopsis thaliana (Mouse-ear cress)).